We begin with the raw amino-acid sequence, 108 residues long: uncharacterized protein (108 aa).

In terms of domain architecture, HTH hxlR-type spans 7–106 (CPRFEKAVDI…WATEWIDPSF (100 aa)).

This is an uncharacterized protein from Bacillus subtilis (strain 168).